The primary structure comprises 489 residues: Protein LMBR1L (489 aa).

At 1-21 (MEAADYEVLSVREQLFHDRVR) the chain is on the extracellular side. An interaction with LGB region spans residues 1 to 59 (MEAADYEVLSVREQLFHDRVRECIISILLFATLYILCHIFLTRFKKPAEFTTVDDEDAT). The LCN1-binding stretch occupies residues 1–76 (MEAADYEVLS…LCTFTLAVAL (76 aa)). Residues 22 to 42 (ECIISILLFATLYILCHIFLT) traverse the membrane as a helical segment. At 43 to 66 (RFKKPAEFTTVDDEDATVNKIALE) the chain is on the cytoplasmic side. Residues 67–87 (LCTFTLAVALGAVLLLPFSII) traverse the membrane as a helical segment. Over 88 to 114 (SNEVLLSLPRNYYIQWLNGSLIHGLWN) the chain is Extracellular. The helical transmembrane segment at 115 to 135 (LVFLFSNLSLVFLMPFAYFFT) threads the bilayer. The Cytoplasmic portion of the chain corresponds to 136-154 (ESEGFAGSRKGVLGRVYET). The helical transmembrane segment at 155–175 (VVMLILLTLLVLGMVWVASAI) threads the bilayer. The Extracellular portion of the chain corresponds to 176 to 196 (VDNDKASRESLYDFWEYYLPY). A helical transmembrane segment spans residues 197 to 217 (LYSCISFLGVLLLLVCTPLGL). Topologically, residues 218–305 (ARMFSVTGKL…NLGYPLAMLC (88 aa)) are cytoplasmic. The helical transmembrane segment at 306-326 (LLVLTGLSVLIVAVHILELLI) threads the bilayer. The Extracellular segment spans residues 327-350 (DEAAMPRGMQDAALGQASFSKLGS). A helical membrane pass occupies residues 351-371 (FGAIIQVVLIFYLMVSSVVGF). The Cytoplasmic segment spans residues 372–388 (YSSPLFGSLRPRWHDTS). Residues 389-409 (MTQIIGNCVCLLVLSSALPVF) form a helical membrane-spanning segment. Topologically, residues 410 to 431 (SRTLGLTRFDLLGDFGRFNWLG) are extracellular. Residues 432 to 452 (NFYIVFLYNAAFAGLTTLCLV) traverse the membrane as a helical segment. Over 453–489 (KTFTAAVRAELIRAFGLDRLPLPVSGFPRASRKKQHQ) the chain is Cytoplasmic.

This sequence belongs to the LIMR family. As to quaternary structure, dimer. Can also form higher oligomers. Interacts with LCN1; this interaction mediates the endocytosis of LCN1. Interacts with UBAC2, FAF2, VCP, AMFR, ZNRF3, CTNNB1, LRP6, GSK3B, FZD6, DVL2 and RNF43. Interacts with GSK3A. Interaction with LGB and SCGB1A1 is controversial. In terms of tissue distribution, highly expressed in the bone marrow, thymus, spleen and lymphocytes.

Its subcellular location is the cell membrane. The protein resides in the endoplasmic reticulum membrane. Its function is as follows. Plays an essential role in lymphocyte development by negatively regulating the canonical Wnt signaling pathway. In association with UBAC2 and E3 ubiquitin-protein ligase AMFR, promotes the ubiquitin-mediated degradation of CTNNB1 and Wnt receptors FZD6 and LRP6. LMBR1L stabilizes the beta-catenin destruction complex that is required for regulating CTNNB1 levels. Acts as a LCN1 receptor and can mediate its endocytosis. This Mus musculus (Mouse) protein is Protein LMBR1L (Lmbr1l).